A 428-amino-acid polypeptide reads, in one-letter code: uncharacterized protein (428 aa).

The next 12 helical transmembrane spans lie at 14–34 (LYDW…FPLF), 55–75 (YTIA…GTIA), 84–104 (FFGF…FIPS), 107–127 (WLLL…ANVF), 149–169 (FGLG…VILL), 182–202 (ASQL…IPMI), 238–258 (LFLF…IITM), 272–292 (SLLI…IIYG), 302–322 (TMLY…YFME), 324–344 (TLDF…IQAL), 361–381 (FFGF…LLIA), and 392–412 (TAVF…AFVP).

It belongs to the major facilitator superfamily.

Its subcellular location is the cell membrane. This is an uncharacterized protein from Bacillus subtilis (strain 168).